The primary structure comprises 185 residues: ATP synthase subunit delta (185 aa).

The protein belongs to the ATPase delta chain family. F-type ATPases have 2 components, F(1) - the catalytic core - and F(0) - the membrane proton channel. F(1) has five subunits: alpha(3), beta(3), gamma(1), delta(1), epsilon(1). CF(0) has four main subunits: a(1), b(1), b'(1) and c(10-14). The alpha and beta chains form an alternating ring which encloses part of the gamma chain. F(1) is attached to F(0) by a central stalk formed by the gamma and epsilon chains, while a peripheral stalk is formed by the delta, b and b' chains.

The protein resides in the cell inner membrane. Its function is as follows. F(1)F(0) ATP synthase produces ATP from ADP in the presence of a proton or sodium gradient. F-type ATPases consist of two structural domains, F(1) containing the extramembraneous catalytic core and F(0) containing the membrane proton channel, linked together by a central stalk and a peripheral stalk. During catalysis, ATP synthesis in the catalytic domain of F(1) is coupled via a rotary mechanism of the central stalk subunits to proton translocation. Functionally, this protein is part of the stalk that links CF(0) to CF(1). It either transmits conformational changes from CF(0) to CF(1) or is implicated in proton conduction. This is ATP synthase subunit delta from Gloeobacter violaceus (strain ATCC 29082 / PCC 7421).